The chain runs to 409 residues: NADH-quinone oxidoreductase subunit D 1 (409 aa).

The protein belongs to the complex I 49 kDa subunit family. In terms of assembly, NDH-1 is composed of 14 different subunits. Subunits NuoB, C, D, E, F, and G constitute the peripheral sector of the complex.

It is found in the cell inner membrane. The catalysed reaction is a quinone + NADH + 5 H(+)(in) = a quinol + NAD(+) + 4 H(+)(out). NDH-1 shuttles electrons from NADH, via FMN and iron-sulfur (Fe-S) centers, to quinones in the respiratory chain. The immediate electron acceptor for the enzyme in this species is believed to be ubiquinone. Couples the redox reaction to proton translocation (for every two electrons transferred, four hydrogen ions are translocated across the cytoplasmic membrane), and thus conserves the redox energy in a proton gradient. The polypeptide is NADH-quinone oxidoreductase subunit D 1 (Solibacter usitatus (strain Ellin6076)).